The primary structure comprises 397 residues: uncharacterized protein (397 aa).

Helical transmembrane passes span 2-24 (LNLL…PGIH), 44-66 (YIPF…SAFL), 92-114 (AIVL…SLFL), 124-143 (AFYC…FILY), 150-169 (SVWE…AVLY), 173-195 (AFNI…INNL), 255-277 (FIVS…VIFI), 297-319 (INTA…LNLS), 331-350 (FKFL…IIGS), and 354-373 (YLIY…LLAV).

It is found in the cell membrane. This is an uncharacterized protein from Methanocaldococcus jannaschii (strain ATCC 43067 / DSM 2661 / JAL-1 / JCM 10045 / NBRC 100440) (Methanococcus jannaschii).